The sequence spans 388 residues: ATP phosphoribosyltransferase regulatory subunit (388 aa).

It belongs to the class-II aminoacyl-tRNA synthetase family. HisZ subfamily. Heteromultimer composed of HisG and HisZ subunits.

Its subcellular location is the cytoplasm. The protein operates within amino-acid biosynthesis; L-histidine biosynthesis; L-histidine from 5-phospho-alpha-D-ribose 1-diphosphate: step 1/9. Functionally, required for the first step of histidine biosynthesis. May allow the feedback regulation of ATP phosphoribosyltransferase activity by histidine. The protein is ATP phosphoribosyltransferase regulatory subunit of Acinetobacter baumannii (strain AB307-0294).